A 180-amino-acid chain; its full sequence is Beta-lactoglobulin (180 aa).

The N-terminal stretch at 1 to 18 (MKCLLLALGLALACAAQA) is a signal peptide. Cystine bridges form between cysteine 84–cysteine 178, cysteine 124–cysteine 137, and cysteine 124–cysteine 139.

The protein belongs to the calycin superfamily. Lipocalin family. Under physiological conditions beta-lactoglobulin exists as an equilibrium mixture of monomeric and dimeric forms. Interaction with LMBR1L is controversial. Alternate disulfide bonds occur in equal amounts. Synthesized in mammary gland and secreted in milk.

Its subcellular location is the secreted. In terms of biological role, primary component of whey, it binds retinol and is probably involved in the transport of that molecule. The polypeptide is Beta-lactoglobulin (LGB) (Bubalus bubalis (Domestic water buffalo)).